Reading from the N-terminus, the 146-residue chain is MORN repeat-containing protein 4 (146 aa).

MORN repeat units follow at residues 16–38 (YRGE…DGGT), 39–61 (YLGH…DGSR), 62–84 (YEGE…DNMT), and 85–107 (FEGE…DGSH).

Interacts with MYO3A.

The protein resides in the cytoplasm. It localises to the cell projection. It is found in the filopodium tip. The protein localises to the stereocilium. Its function is as follows. Plays a role in promoting axonal degeneration following neuronal injury by toxic insult or trauma. This is MORN repeat-containing protein 4 (MORN4) from Homo sapiens (Human).